A 600-amino-acid polypeptide reads, in one-letter code: Aspartate--tRNA(Asp/Asn) ligase (600 aa).

Residue Glu-181 participates in L-aspartate binding. The aspartate stretch occupies residues 205 to 208; sequence QQFK. L-aspartate is bound at residue Arg-227. ATP contacts are provided by residues 227–229 and Gln-236; that span reads RDE. His-455 is a binding site for L-aspartate. Residue Glu-489 coordinates ATP. Arg-496 contributes to the L-aspartate binding site. 541-544 provides a ligand contact to ATP; the sequence is GIDR.

This sequence belongs to the class-II aminoacyl-tRNA synthetase family. Type 1 subfamily. In terms of assembly, homodimer.

The protein localises to the cytoplasm. It carries out the reaction tRNA(Asx) + L-aspartate + ATP = L-aspartyl-tRNA(Asx) + AMP + diphosphate. Aspartyl-tRNA synthetase with relaxed tRNA specificity since it is able to aspartylate not only its cognate tRNA(Asp) but also tRNA(Asn). Reaction proceeds in two steps: L-aspartate is first activated by ATP to form Asp-AMP and then transferred to the acceptor end of tRNA(Asp/Asn). The protein is Aspartate--tRNA(Asp/Asn) ligase of Rubrobacter xylanophilus (strain DSM 9941 / JCM 11954 / NBRC 16129 / PRD-1).